We begin with the raw amino-acid sequence, 210 residues long: Claudin-4 (210 aa).

Residues 1–7 (MASMGLQ) lie on the Cytoplasmic side of the membrane. The segment at 1-103 (MASMGLQVMG…GVLLSVVGGK (103 aa)) is interaction with EPHA2. The helical transmembrane segment at 8-28 (VMGIALAVLGWLGAILSCALP) threads the bilayer. At 29-81 (MWRVTAFIGSNIVTSQTIWEGLWMNCVVQSTGQMQCKVYDSLLALPQDLQAAR) the chain is on the extracellular side. A disulfide bridge connects residues C54 and C64. Residues 82–102 (ALMVVSIILAALGVLLSVVGG) form a helical membrane-spanning segment. The Cytoplasmic portion of the chain corresponds to 103–117 (KCTNCVEDESAKAKT). Residues 118 to 138 (MIVAGVVFLLAGLLVMVPASW) form a helical membrane-spanning segment. Topologically, residues 139 to 160 (TANNIIRDFYNPLVVSGQKREM) are extracellular. Residues 161-181 (GASLYVGWAASGLLLLGGALL) traverse the membrane as a helical segment. Topologically, residues 182–210 (CCNCPPRADKPYSAKYSAAARSAPASNYV) are cytoplasmic. Y209 is subject to Phosphotyrosine. Residues 209 to 210 (YV) are interactions with TJP1, TJP2 and TJP3.

This sequence belongs to the claudin family. In terms of assembly, can form heteropolymeric strands with other claudins. Interacts with CLDN8. Interacts with CLDN1. Directly interacts with TJP1/ZO-1. Interacts with TJP2/ZO-2 and TJP3/ZO-3. Interacts with EPHA2; phosphorylates CLDN4 and may regulate tight junctions. Post-translationally, phosphorylated. Phosphorylation by EPHA2 is stimulated by EFNA1 and alters interaction with TJP1.

It is found in the cell junction. It localises to the tight junction. Its subcellular location is the cell membrane. The enzyme catalyses chloride(in) = chloride(out). It catalyses the reaction bromide(in) = bromide(out). It carries out the reaction iodide(out) = iodide(in). The catalysed reaction is fluoride(in) = fluoride(out). Can associate with other claudins to regulate tight junction structural and functional strand dynamics. May coassemble with CLDN8 into tight junction strands containing anion-selective channels that convey paracellular chloride permeability in renal collecting ducts. May integrate into CLDN3 strands to modulate localized tight junction barrier properties. May disrupt strand assembly of channel-forming CLDN2 and CLDN15 and inhibit cation conductance. Cannot form tight junction strands on its own. The chain is Claudin-4 (CLDN4) from Canis lupus familiaris (Dog).